The following is a 1508-amino-acid chain: Calponin homology domain-containing protein DDB_G0272472 (1508 aa).

6 disordered regions span residues 1-165 (MFRN…KNDF), 197-290 (DSEE…NLSP), 309-518 (DFKS…TSIV), 531-561 (AANATTTNNDNNNNNNNTSSPTNKSTNLFND), 680-706 (KEKQDQLEKQRKLEQQRLQKEKDEKEL), and 1036-1391 (KIEK…KKSA). Low complexity predominate over residues 81 to 107 (SSSPSTSTTTTTKSSSTTTTTTTSSSS). A compositionally biased stretch (basic and acidic residues) spans 208–222 (PIKKKQSNDLEKNIF). Low complexity-rich tracts occupy residues 234-251 (KQSTVTKPKQPQQQQKQP), 263-290 (FGDSSLSLDSPLLASKSSPPKSSVNLSP), and 315-332 (SNNTTTVKKAVPISKSKP). 2 stretches are compositionally biased toward basic and acidic residues: residues 337-346 (QKEEIKEVST) and 362-371 (VDEKPKERST). A compositionally biased stretch (polar residues) spans 380-391 (KTVTVKSNNSFE). Residues 395–438 (FGSTTTNDDGGDNDFSFTPATTPSSSSSTKATTTSPSSTTTTKS) are compositionally biased toward low complexity. A compositionally biased stretch (polar residues) spans 439 to 452 (NINIGQKSNKSVDQ). Residues 455-498 (QFLNDIFQQEEQDKKRREEEAKLKQQQKQKEKEQIKDEIDDLFK) adopt a coiled-coil conformation. Residues 465–498 (EQDKKRREEEAKLKQQQKQKEKEQIKDEIDDLFK) are compositionally biased toward basic and acidic residues. Composition is skewed to low complexity over residues 500–516 (SKPTTTTTSTPSKSTTS) and 531–557 (AANATTTNNDNNNNNNNTSSPTNKSTN). Residues 1036-1164 (KIEKEKEERD…DQEEKEKQLK (129 aa)) show a composition bias toward basic and acidic residues. 2 stretches are compositionally biased toward low complexity: residues 1165–1181 (EQQQQQKVIIPTTTTTT) and 1189–1206 (DSDALLNLPDSASSSSHS). The span at 1216-1225 (SKAKGRKKPT) shows a compositional bias: basic residues. Positions 1226-1235 (RRELTKDGNR) are enriched in basic and acidic residues. Residues 1333–1355 (PTVTQTTTTTTTPPTTPPSSSVQ) show a composition bias toward low complexity. A compositionally biased stretch (polar residues) spans 1362-1374 (RSFSGSSFMGINS). One can recognise a Calponin-homology (CH) domain in the interval 1397-1504 (MKALDVLLQW…YLSEFFKVMK (108 aa)).

This chain is Calponin homology domain-containing protein DDB_G0272472, found in Dictyostelium discoideum (Social amoeba).